Here is a 168-residue protein sequence, read N- to C-terminus: NADH-quinone oxidoreductase subunit B (168 aa).

C49, C50, C114, and C144 together coordinate [4Fe-4S] cluster.

Belongs to the complex I 20 kDa subunit family. As to quaternary structure, NDH-1 is composed of 14 different subunits. Subunits NuoB, C, D, E, F, and G constitute the peripheral sector of the complex. [4Fe-4S] cluster is required as a cofactor.

It localises to the cell membrane. The catalysed reaction is a quinone + NADH + 5 H(+)(in) = a quinol + NAD(+) + 4 H(+)(out). NDH-1 shuttles electrons from NADH, via FMN and iron-sulfur (Fe-S) centers, to quinones in the respiratory chain. Couples the redox reaction to proton translocation (for every two electrons transferred, four hydrogen ions are translocated across the cytoplasmic membrane), and thus conserves the redox energy in a proton gradient. This is NADH-quinone oxidoreductase subunit B from Wolbachia sp. subsp. Brugia malayi (strain TRS).